The chain runs to 102 residues: Small ribosomal subunit protein uS10 (102 aa).

The protein belongs to the universal ribosomal protein uS10 family. In terms of assembly, part of the 30S ribosomal subunit.

Involved in the binding of tRNA to the ribosomes. The protein is Small ribosomal subunit protein uS10 of Bifidobacterium longum subsp. infantis (strain ATCC 15697 / DSM 20088 / JCM 1222 / NCTC 11817 / S12).